The sequence spans 293 residues: 4-hydroxy-tetrahydrodipicolinate synthase (293 aa).

T45 is a binding site for pyruvate. The active-site Proton donor/acceptor is the Y133. The active-site Schiff-base intermediate with substrate is K162. Position 204 (I204) interacts with pyruvate.

This sequence belongs to the DapA family. Homotetramer; dimer of dimers.

The protein resides in the cytoplasm. It catalyses the reaction L-aspartate 4-semialdehyde + pyruvate = (2S,4S)-4-hydroxy-2,3,4,5-tetrahydrodipicolinate + H2O + H(+). Its pathway is amino-acid biosynthesis; L-lysine biosynthesis via DAP pathway; (S)-tetrahydrodipicolinate from L-aspartate: step 3/4. In terms of biological role, catalyzes the condensation of (S)-aspartate-beta-semialdehyde [(S)-ASA] and pyruvate to 4-hydroxy-tetrahydrodipicolinate (HTPA). The sequence is that of 4-hydroxy-tetrahydrodipicolinate synthase from Chelativorans sp. (strain BNC1).